Consider the following 309-residue polypeptide: Probable 4-hydroxy-2-oxoglutarate aldolase, mitochondrial (309 aa).

49–50 (SN) lines the substrate pocket. Lysine 173 serves as the catalytic Schiff-base intermediate with substrate.

This sequence belongs to the DapA family.

The enzyme catalyses (4S)-4-hydroxy-2-oxoglutarate = glyoxylate + pyruvate. It carries out the reaction (4R)-4-hydroxy-2-oxoglutarate = glyoxylate + pyruvate. Inhibited by divalent cations. Functionally, catalyzes the final step in the metabolic pathway of hydroxyproline. Involved in osmoadaptation. The polypeptide is Probable 4-hydroxy-2-oxoglutarate aldolase, mitochondrial (Emericella nidulans (strain FGSC A4 / ATCC 38163 / CBS 112.46 / NRRL 194 / M139) (Aspergillus nidulans)).